Here is a 116-residue protein sequence, read N- to C-terminus: Large ribosomal subunit protein bL17 (116 aa).

Belongs to the bacterial ribosomal protein bL17 family. As to quaternary structure, part of the 50S ribosomal subunit. Contacts protein L32.

This chain is Large ribosomal subunit protein bL17, found in Trichodesmium erythraeum (strain IMS101).